A 314-amino-acid polypeptide reads, in one-letter code: Glutamyl-Q tRNA(Asp) synthetase (314 aa).

Residues 14 to 18 (RFAPS) and Glu50 each bind L-glutamate. The 'HIGH' region motif lies at 17–27 (PSPTGPLHVGS). Residues Cys106, Cys108, Tyr129, and Cys133 each contribute to the Zn(2+) site. L-glutamate is bound by residues Tyr187 and Arg205. A 'KMSKS' region motif is present at residues 243 to 247 (KLSKR). Lys246 provides a ligand contact to ATP.

The protein belongs to the class-I aminoacyl-tRNA synthetase family. GluQ subfamily. The cofactor is Zn(2+).

Functionally, catalyzes the tRNA-independent activation of glutamate in presence of ATP and the subsequent transfer of glutamate onto a tRNA(Asp). Glutamate is transferred on the 2-amino-5-(4,5-dihydroxy-2-cyclopenten-1-yl) moiety of the queuosine in the wobble position of the QUC anticodon. In Geobacter sulfurreducens (strain ATCC 51573 / DSM 12127 / PCA), this protein is Glutamyl-Q tRNA(Asp) synthetase.